A 210-amino-acid polypeptide reads, in one-letter code: Homeobox protein Rhox5 (210 aa).

Residues 1–119 (MEAEGSSRKV…GNPGGRQMPL (119 aa)) form a disordered region. Over residues 17–30 (GVKEDSEEQHDVKA) the composition is skewed to basic and acidic residues. The segment covering 47–79 (GQPGVGAVGTEGEGEELNGGKGHFGPGAPGPMG) has biased composition (gly residues). A DNA-binding region (homeobox; atypical) is located at residues 117–175 (MPLQGSRFAQHRLRELESILQRTNSFDVPREDLDRLMDACVSRVQNWFKIRRAAARRTR).

It is found in the nucleus. Functionally, transcription factor required for differentiation of embryonic stem cells (ESCs) into primordial germ cells. The polypeptide is Homeobox protein Rhox5 (Rhox5) (Mus musculus (Mouse)).